Here is a 531-residue protein sequence, read N- to C-terminus: Sterol 26-hydroxylase, mitochondrial (531 aa).

The transit peptide at 1–33 (MAALGCARLRWALRGAGRGLCPHGARAKAAIPA) directs the protein to the mitochondrion. Residue lysine 283 is modified to N6-acetyllysine. The sterol-binding stretch occupies residues 384 to 398 (PLLKAVLKETLRLYP). Cysteine 476 is a binding site for heme. An N6-acetyllysine mark is found at lysine 509 and lysine 520.

This sequence belongs to the cytochrome P450 family. Interacts with HSP70; this interaction is required for initial targeting to mitochondria. Requires heme as cofactor. In terms of tissue distribution, expressed in the neural retina and underlying retinal pigment epithelium (at protein level). Expressed in the gray and white matter of cerebellum (at protein level).

Its subcellular location is the mitochondrion inner membrane. The enzyme catalyses 5beta-cholestane-3alpha,7alpha,12alpha-triol + 6 reduced [adrenodoxin] + 3 O2 + 5 H(+) = (25R)-3alpha,7alpha,12alpha-trihydroxy-5beta-cholestan-26-oate + 6 oxidized [adrenodoxin] + 4 H2O. It catalyses the reaction cholestanol + 2 reduced [adrenodoxin] + O2 + 2 H(+) = (25R)-26-hydroxycholestanol + 2 oxidized [adrenodoxin] + H2O. It carries out the reaction (25R)-3beta-hydroxycholest-5-en-7-one-26-al + 2 reduced [adrenodoxin] + O2 + H(+) = (25R)-3beta-hydroxycholest-5-en-7-one-26-oate + 2 oxidized [adrenodoxin] + H2O. The catalysed reaction is (25R)-3beta,26-dihydroxycholest-5-en-7-one + 2 reduced [adrenodoxin] + O2 + 2 H(+) = (25R)-3beta-hydroxycholest-5-en-7-one-26-al + 2 oxidized [adrenodoxin] + 2 H2O. The enzyme catalyses 7-oxocholesterol + 2 reduced [adrenodoxin] + O2 + 2 H(+) = (25R)-3beta,26-dihydroxycholest-5-en-7-one + 2 oxidized [adrenodoxin] + H2O. It catalyses the reaction calciol + 2 reduced [adrenodoxin] + O2 + 2 H(+) = calcidiol + 2 oxidized [adrenodoxin] + H2O. It carries out the reaction (25R)-5beta-cholestane-3alpha,7alpha,12alpha,26-tetrol + 2 reduced [adrenodoxin] + O2 + 2 H(+) = (25R)-3alpha,7alpha,12alpha-trihydroxy-5beta-cholestan-26-al + 2 oxidized [adrenodoxin] + 2 H2O. The catalysed reaction is 2 reduced [adrenodoxin] + cholesterol + O2 + 2 H(+) = (25R)-cholest-5-ene-3beta,26-diol + 2 oxidized [adrenodoxin] + H2O. The enzyme catalyses (25R)-3beta,4beta-dihydroxycholest-5-en-26-al + 2 reduced [adrenodoxin] + O2 + H(+) = (25R)-3beta,4beta-dihydroxycholest-5-en-26-oate + 2 oxidized [adrenodoxin] + H2O. It catalyses the reaction (25R)-4beta,26-dihydroxycholesterol + 2 reduced [adrenodoxin] + O2 + 2 H(+) = (25R)-3beta,4beta-dihydroxycholest-5-en-26-al + 2 oxidized [adrenodoxin] + 2 H2O. It carries out the reaction 4beta-hydroxycholesterol + 2 reduced [adrenodoxin] + O2 + 2 H(+) = (25R)-4beta,26-dihydroxycholesterol + 2 oxidized [adrenodoxin] + H2O. The catalysed reaction is (25R)-3beta-hydroxy-5-cholesten-26-al + 2 reduced [adrenodoxin] + O2 + H(+) = (25R)-3beta-hydroxy-5-cholestenoate + 2 oxidized [adrenodoxin] + H2O. The enzyme catalyses (25R)-cholest-5-ene-3beta,26-diol + 2 reduced [adrenodoxin] + O2 + 2 H(+) = (25R)-3beta-hydroxy-5-cholesten-26-al + 2 oxidized [adrenodoxin] + 2 H2O. It catalyses the reaction (25R)-3alpha,7alpha,12alpha-trihydroxy-5beta-cholestan-26-al + 2 reduced [adrenodoxin] + O2 + H(+) = (25R)-3alpha,7alpha,12alpha-trihydroxy-5beta-cholestan-26-oate + 2 oxidized [adrenodoxin] + H2O. It carries out the reaction 5beta-cholestane-3alpha,7alpha,12alpha-triol + 2 reduced [adrenodoxin] + O2 + 2 H(+) = (25R)-5beta-cholestane-3alpha,7alpha,12alpha,26-tetrol + 2 oxidized [adrenodoxin] + H2O. Its pathway is hormone biosynthesis; cholecalciferol biosynthesis. It participates in steroid metabolism; cholesterol degradation. It functions in the pathway lipid metabolism; bile acid biosynthesis. In terms of biological role, cytochrome P450 monooxygenase that catalyzes regio- and stereospecific hydroxylation of cholesterol and its derivatives. Hydroxylates (with R stereochemistry) the terminal methyl group of cholesterol side-chain in a three step reaction to yield at first a C26 alcohol, then a C26 aldehyde and finally a C26 acid. Regulates cholesterol homeostasis by catalyzing the conversion of excess cholesterol to bile acids via both the 'neutral' (classic) and the 'acid' (alternative) pathways. May also regulate cholesterol homeostasis via generation of active oxysterols, which act as ligands for NR1H2 and NR1H3 nuclear receptors, modulating the transcription of genes involved in lipid metabolism. Plays a role in cholestanol metabolism in the cerebellum. Similarly to cholesterol, hydroxylates cholestanol and may facilitate sterol diffusion through the blood-brain barrier to the systemic circulation for further degradation. Also hydroxylates retinal 7-ketocholesterol, a noxious oxysterol with pro-inflammatory and pro-apoptotic effects, and may play a role in its elimination from the retinal pigment epithelium. May play a redundant role in vitamin D biosynthesis. Catalyzes 25-hydroxylation of vitamin D3 that is required for its conversion to a functionally active form. This is Sterol 26-hydroxylase, mitochondrial from Homo sapiens (Human).